Here is a 771-residue protein sequence, read N- to C-terminus: Probable exo-1,4-beta-xylosidase bxlB (771 aa).

Residues 1–25 (MAHITSWHYGNAIALLVSLAPGALS) form the signal peptide. The N-linked (GlcNAc...) asparagine glycan is linked to asparagine 67. Aspartate 293 is a catalytic residue. Residues asparagine 305, asparagine 345, asparagine 423, and asparagine 464 are each glycosylated (N-linked (GlcNAc...) asparagine).

Belongs to the glycosyl hydrolase 3 family.

Its subcellular location is the secreted. The catalysed reaction is Hydrolysis of (1-&gt;4)-beta-D-xylans, to remove successive D-xylose residues from the non-reducing termini.. Its pathway is glycan degradation; xylan degradation. Functionally, xylan 1,4-beta-xylosidase involved in the hydrolysis of xylan, a major structural heterogeneous polysaccharide found in plant biomass representing the second most abundant polysaccharide in the biosphere, after cellulose. The protein is Probable exo-1,4-beta-xylosidase bxlB (bxlB) of Aspergillus fumigatus (strain CBS 144.89 / FGSC A1163 / CEA10) (Neosartorya fumigata).